We begin with the raw amino-acid sequence, 118 residues long: Small ribosomal subunit protein uS13 (118 aa).

The tract at residues 94-118 (GLPVRGQRTKTNARTRKGPRKPIKK) is disordered.

It belongs to the universal ribosomal protein uS13 family. Part of the 30S ribosomal subunit. Forms a loose heterodimer with protein S19. Forms two bridges to the 50S subunit in the 70S ribosome.

Located at the top of the head of the 30S subunit, it contacts several helices of the 16S rRNA. In the 70S ribosome it contacts the 23S rRNA (bridge B1a) and protein L5 of the 50S subunit (bridge B1b), connecting the 2 subunits; these bridges are implicated in subunit movement. Contacts the tRNAs in the A and P-sites. The protein is Small ribosomal subunit protein uS13 of Edwardsiella ictaluri (strain 93-146).